Consider the following 398-residue polypeptide: 1-deoxy-D-xylulose 5-phosphate reductoisomerase (398 aa).

Residues Thr-11, Gly-12, Ser-13, Ile-14, Arg-38, Asn-39, and Asn-125 each coordinate NADPH. Lys-126 contacts 1-deoxy-D-xylulose 5-phosphate. Glu-127 contributes to the NADPH binding site. Asp-151 provides a ligand contact to Mn(2+). 1-deoxy-D-xylulose 5-phosphate-binding residues include Ser-152, Glu-153, Ser-179, and His-202. Glu-153 serves as a coordination point for Mn(2+). Gly-208 contributes to the NADPH binding site. Residues Ser-215, Asn-220, Lys-221, and Glu-224 each contribute to the 1-deoxy-D-xylulose 5-phosphate site. A Mn(2+)-binding site is contributed by Glu-224.

This sequence belongs to the DXR family. It depends on Mg(2+) as a cofactor. Mn(2+) serves as cofactor.

It catalyses the reaction 2-C-methyl-D-erythritol 4-phosphate + NADP(+) = 1-deoxy-D-xylulose 5-phosphate + NADPH + H(+). Its pathway is isoprenoid biosynthesis; isopentenyl diphosphate biosynthesis via DXP pathway; isopentenyl diphosphate from 1-deoxy-D-xylulose 5-phosphate: step 1/6. In terms of biological role, catalyzes the NADPH-dependent rearrangement and reduction of 1-deoxy-D-xylulose-5-phosphate (DXP) to 2-C-methyl-D-erythritol 4-phosphate (MEP). The chain is 1-deoxy-D-xylulose 5-phosphate reductoisomerase from Burkholderia pseudomallei (strain 1106a).